A 67-amino-acid polypeptide reads, in one-letter code: Large ribosomal subunit protein bL35 (67 aa).

Belongs to the bacterial ribosomal protein bL35 family.

The sequence is that of Large ribosomal subunit protein bL35 from Bartonella quintana (strain Toulouse) (Rochalimaea quintana).